Here is a 485-residue protein sequence, read N- to C-terminus: Glutamyl-tRNA(Gln) amidotransferase subunit A (485 aa).

Residues lysine 79 and serine 154 each act as charge relay system in the active site. Serine 178 serves as the catalytic Acyl-ester intermediate.

Belongs to the amidase family. GatA subfamily. As to quaternary structure, heterotrimer of A, B and C subunits.

It catalyses the reaction L-glutamyl-tRNA(Gln) + L-glutamine + ATP + H2O = L-glutaminyl-tRNA(Gln) + L-glutamate + ADP + phosphate + H(+). Allows the formation of correctly charged Gln-tRNA(Gln) through the transamidation of misacylated Glu-tRNA(Gln) in organisms which lack glutaminyl-tRNA synthetase. The reaction takes place in the presence of glutamine and ATP through an activated gamma-phospho-Glu-tRNA(Gln). This Carboxydothermus hydrogenoformans (strain ATCC BAA-161 / DSM 6008 / Z-2901) protein is Glutamyl-tRNA(Gln) amidotransferase subunit A.